A 975-amino-acid polypeptide reads, in one-letter code: E3 ubiquitin-protein ligase NEDD4-like (975 aa).

Ala-2 is subject to N-acetylalanine. A C2 domain is found at 4–126; sequence GLGEPVYGLS…TEDPTMERPY (123 aa). Disordered stretches follow at residues 178–202, 244–272, and 285–312; these read DSND…WEEK, AAHR…VPEP, and DSLG…EELS. Positions 193 to 226 constitute a WW 1 domain; it reads PPLPPGWEEKVDNLGRTYYVNHNNRTTQWHRPSL. Ser-312 is modified (phosphoserine). Thr-318 is subject to Phosphothreonine. Phosphoserine; by WNK1 and WNK4 is present on Ser-342. Disordered regions lie at residues 349 to 393 and 424 to 496; these read EQGH…GWEE and GASG…KVTQ. Thr-367 is modified (phosphothreonine; by SGK1). Residues 385-418 form the WW 2 domain; that stretch reads PGLPSGWEERKDAKGRTYYVNHNNRTTTWTRPIM. The residue at position 446 (Ser-446) is a Phosphoserine. Residue Ser-448 is modified to Phosphoserine; by PKA and SGK1. Position 449 is a phosphoserine; by WNK1 and WNK4 (Ser-449). Residues 460–471 show a composition bias toward basic and acidic residues; that stretch reads GAKDSPVRRAVK. Phosphoserine occurs at positions 464, 475, 479, 483, and 487. 2 consecutive WW domains span residues 497–530 and 548–581; these read SFLP…DPRL and GPLP…DPRL. Residues 640–974 enclose the HECT domain; the sequence is RPDVLKARLW…VENAQGFEGV (335 aa). Catalysis depends on Cys-942, which acts as the Glycyl thioester intermediate.

In terms of assembly, interacts with UBE2E3. Interacts with NDFIP1; this interaction activates the E3 ubiquitin-protein ligase. Interacts with NDFIP2; this interaction activates the E3 ubiquitin-protein ligase. Interacts (via WW domains) with SCN1A. Interacts (via WW domains) with SCN2A. Interacts (via WW domains) with SCN3A. Interacts (via WW domains) with SCN5A. Interacts (via WW domains) with SCN8A. Interacts (via WW domains) with SCN9A. Interacts (via WW domains) with SCN10A. Interacts (via WW domains) with CLCN5. Interacts with SMAD2. Interacts with SMAD3. Interacts with SMAD6. Interacts with SMAD7. The phosphorylated form interacts with 14-3-3 proteins. Interacts with TNK2. Interacts with WNK1. Interacts with SGK1. Interacts (via C2 domain) with NPC2. Interacts with ARRDC4. Interacts with KCNQ1; promotes internalization of KCNQ1. Interacts (via domains WW1, 3 and 4) with USP36; the interaction inhibits ubiquitination of, at least, NTRK1, KCNQ2 and KCNQ3 by NEDD4L. Interacts with PRRG4 (via cytoplasmic domain). Interacts with LDLRAD3; the interaction is direct. Interacts with UBE2D2. Interacts with TTYH2 and TTYH3. As to quaternary structure, (Microbial infection) Interacts with Epstein-Barr virus LMP2A. Phosphorylated by SGK1 or PKA; which impairs interaction with SCNN. Interaction with YWHAH inhibits dephosphorylation. In terms of processing, auto-ubiquitinated. Deubiquitinated by USP36, no effect on NEDD4L protein levels. Both proteins interact and regulate each other's ubiquitination levels. Ubiquitously expressed, with highest levels in prostate, pancreas, and kidney. Expressed in melanocytes.

It is found in the cytoplasm. The protein resides in the golgi apparatus. Its subcellular location is the endosome. It localises to the multivesicular body. The catalysed reaction is S-ubiquitinyl-[E2 ubiquitin-conjugating enzyme]-L-cysteine + [acceptor protein]-L-lysine = [E2 ubiquitin-conjugating enzyme]-L-cysteine + N(6)-ubiquitinyl-[acceptor protein]-L-lysine.. It catalyses the reaction [E2 ubiquitin-conjugating enzyme]-S-ubiquitinyl-L-cysteine + [acceptor protein]-L-cysteine = [E2 ubiquitin-conjugating enzyme]-L-cysteine + [acceptor protein]-S-ubiquitinyl-L-cysteine.. It functions in the pathway protein modification; protein ubiquitination. With respect to regulation, activated by NDFIP1- and NDFIP2-binding. Its function is as follows. E3 ubiquitin-protein ligase that mediates the polyubiquitination of lysine and cysteine residues on target proteins and is thereby implicated in the regulation of various signaling pathways including autophagy, innate immunity or DNA repair. Inhibits TGF-beta signaling by triggering SMAD2 and TGFBR1 ubiquitination and proteasome-dependent degradation. Downregulates autophagy and cell growth by ubiquitinating and reducing cellular ULK1 or ASCT2 levels. Promotes ubiquitination and internalization of various plasma membrane channels such as ENaC, SCN2A/Nav1.2, SCN3A/Nav1.3, SCN5A/Nav1.5, SCN9A/Nav1.7, SCN10A/Nav1.8, KCNA3/Kv1.3, KCNH2, EAAT1, KCNQ2/Kv7.2, KCNQ3/Kv7.3 or CLC5. Promotes ubiquitination and degradation of SGK1 and TNK2. Ubiquitinates BRAT1 and this ubiquitination is enhanced in the presence of NDFIP1. Plays a role in dendrite formation by melanocytes. Involved in the regulation of TOR signaling. Ubiquitinates and regulates protein levels of NTRK1 once this one is activated by NGF. Plays a role in antiviral innate immunity by catalyzing 'Lys-29'-linked cysteine ubiquitination of TRAF3, resulting in enhanced 'Lys-48' and 'Lys-63'-linked ubiquitination of TRAF3. Ubiquitinates TTYH2 and TTYH3 and regulates protein levels of TTYH2. The chain is E3 ubiquitin-protein ligase NEDD4-like from Homo sapiens (Human).